The primary structure comprises 711 residues: MEPLMSFKQKNDYGLHALVILAQYHNIAVSPEEIKHKFDPEGKGIDLVAWLLAAKSFELKAKKVKKSIDRLPFIHLPALIWRDDGQHFILTKIDTQTNRYLIFDLEERNPKVLSAVEFQQVFQGNVILLTSRASIMGKLAKFDFTWFIPAIIKYRKIFVEVMIVSIFLQLFALITPLFFQVVMDKVLVHRGFSTLNVITVALAIVVIFEIVLSGLRTYVFSHSTSRIDVELGAKLFRHLLALPISYFENRRVGDTVARVRELDQIRNFLTGQALTSVLDLLFSFIFFAVMWYYSPKLTIVILLSLPCYIAWSIFISPILRRRLDEKFTRNADNQAFLVESVTAIDTIKALAVTPQMTNIWDKQLASYVSADFRVTVLATIGQQGVQLIQKTVMIINLWLGAHLVISGDLSIGQLIAFNMLSGQVIAPVIRLAQLWQDFQQVGISITRLGDVLNAPTENFQGKLSLPEINGDVTFKNIRFRYKPDAPIILNDVNLTIKQGEVIGIVGRSGSGKSTLTKLLQRFYIPENGQVLIDGHDLALADPNWLRRQIGVVLQDNVLLNRSIRDNIALTDPSMPMEQVIHAAKLAGAHDFISELREGYNTMVGEQGAGLSGGQRQRIAIARALVNNPRILIFDEATSALDYESEHIIMRNMQQICHGRTVIIIAHRLSTVRKADRIIVMEKGHIVERGKHSELLENKDGLYYYLNQLQSI.

Residues 1 to 129 (MEPLMSFKQK…QVFQGNVILL (129 aa)) enclose the Peptidase C39 domain. Transmembrane regions (helical) follow at residues 157–177 (IFVE…ITPL), 195–215 (LNVI…LSGL), 273–293 (ALTS…MWYY), 299–319 (IVIL…SPIL), and 392–412 (VMII…LSIG). The ABC transmembrane type-1 domain occupies 158-440 (FVEVMIVSIF…LAQLWQDFQQ (283 aa)). One can recognise an ABC transporter domain in the interval 472-707 (VTFKNIRFRY…KDGLYYYLNQ (236 aa)). Position 506-513 (506-513 (GRSGSGKS)) interacts with ATP.

The protein belongs to the ABC transporter superfamily. Protein-1 exporter (TC 3.A.1.109) family. As to quaternary structure, homodimer.

Its subcellular location is the cell inner membrane. It carries out the reaction ATP + H2O + proteinSide 1 = ADP + phosphate + proteinSide 2.. Functionally, part of the ABC transporter complex PaxBD involved in PaxA export. Transmembrane domains (TMD) form a pore in the inner membrane and the ATP-binding domain (NBD) is responsible for energy generation. In Pasteurella aerogenes, this protein is Exotoxin translocation ATP-binding protein PaxB (paxB).